Reading from the N-terminus, the 623-residue chain is Glycoprotein (623 aa).

The first 12 residues, 1-12 (MFKVLIITLLVN), serve as a signal peptide directing secretion. The Virion surface segment spans residues 13–539 (KIHLEKIYNV…FTSTAKAVRW (527 aa)). 5 N-linked (GlcNAc...) asparagine; by host glycosylation sites follow: Asn175, Asn264, Asn416, Asn438, and Asn507. The chain crosses the membrane as a helical span at residues 540–554 (TIWAVGAIVTTYAIY). The Intravirion portion of the chain corresponds to 555–623 (KLYKMVKSNS…QTGDDRFFDH (69 aa)).

This sequence belongs to the rhabdoviruses glycoprotein family. In terms of assembly, homotrimer.

Its subcellular location is the virion membrane. Functionally, attaches the virus to host cellular receptors, inducing endocytosis of the virion. The acidic pH of the endosome induces conformational changes in the glycoprotein trimer which trigger fusion between the virus and the cell membrane. In Bovine ephemeral fever virus (strain BB7721) (BEFV), this protein is Glycoprotein (G).